The sequence spans 576 residues: 5'-nucleotidase (576 aa).

The signal sequence occupies residues 1 to 28 (MRPAAATAPKWLLLALSALLPLWPTAKS). Residues D38 and H40 each coordinate Zn(2+). C53 and C59 are oxidised to a cystine. N55 is a glycosylation site (N-linked (GlcNAc...) asparagine). Residues D87, N119, H222, and H245 each contribute to the Zn(2+) site. N-linked (GlcNAc...) asparagine glycosylation is found at N313, N335, and N349. Intrachain disulfides connect C355–C360 and C367–C389. R356 lines the AMP pocket. An IMP-binding site is contributed by R356. AMP contacts are provided by N392 and R397. 2 residues coordinate IMP: N392 and R397. N405 carries N-linked (GlcNAc...) asparagine glycosylation. Residue F419 participates in AMP binding. F419 contacts IMP. A disulfide bridge connects residues C478 and C481. 2 residues coordinate AMP: Y502 and D508. Residues Y502 and D508 each coordinate IMP. S551 carries GPI-anchor amidated serine lipidation. Positions 552 to 576 (AASHYQGSFPLIILSFWAVILVLYQ) are cleaved as a propeptide — removed in mature form.

This sequence belongs to the 5'-nucleotidase family. Homodimer. The cofactor is Zn(2+). In terms of tissue distribution, expressed in the brain.

Its subcellular location is the cell membrane. It carries out the reaction a ribonucleoside 5'-phosphate + H2O = a ribonucleoside + phosphate. It catalyses the reaction a 2'-deoxyribonucleoside 5'-phosphate + H2O = a 2'-deoxyribonucleoside + phosphate. The enzyme catalyses dTMP + H2O = thymidine + phosphate. The catalysed reaction is CMP + H2O = cytidine + phosphate. It carries out the reaction IMP + H2O = inosine + phosphate. It catalyses the reaction AMP + H2O = adenosine + phosphate. The enzyme catalyses GMP + H2O = guanosine + phosphate. The catalysed reaction is UMP + H2O = uridine + phosphate. It carries out the reaction dAMP + H2O = 2'-deoxyadenosine + phosphate. It catalyses the reaction dCMP + H2O = 2'-deoxycytidine + phosphate. Its function is as follows. Catalyzes the hydrolysis of nucleotide monophosphates, releasing inorganic phosphate and the corresponding nucleoside. AMP is the preferred substrate but can also hydrolyze CMP and GMP. Shows a preference for ribonucleotide monophosphates over their equivalent deoxyribose forms. Other substrates include IMP, UMP, dAMP, dCMP, dTMP, NAD and NMN. The protein is 5'-nucleotidase (Nt5e) of Rattus norvegicus (Rat).